Reading from the N-terminus, the 298-residue chain is NFU1 iron-sulfur cluster scaffold homolog, mitochondrial (298 aa).

Positions 190-258 are nifU; it reads IKELLDTRIR…IPEVESVEQV (69 aa). [4Fe-4S] cluster-binding residues include cysteine 227 and cysteine 230. Residues 279–288 show a composition bias toward polar residues; it reads QKESVNQPNA. The segment at 279–298 is disordered; sequence QKESVNQPNAPVNIGGGTPN.

It belongs to the NifU family.

It is found in the mitochondrion. Its function is as follows. Molecular scaffold for [Fe-S] cluster assembly of mitochondrial iron-sulfur proteins. The chain is NFU1 iron-sulfur cluster scaffold homolog, mitochondrial from Drosophila virilis (Fruit fly).